We begin with the raw amino-acid sequence, 230 residues long: Urease accessory protein UreE (230 aa).

Residues 197–230 (LHIHAIHSHGDGDSHNHDHDHSHSHGDHDHDHKH) are disordered. Residues 204 to 230 (SHGDGDSHNHDHDHSHSHGDHDHDHKH) show a composition bias toward basic and acidic residues.

Belongs to the UreE family.

It localises to the cytoplasm. In terms of biological role, involved in urease metallocenter assembly. Binds nickel. Probably functions as a nickel donor during metallocenter assembly. The protein is Urease accessory protein UreE of Yersinia aldovae.